A 309-amino-acid chain; its full sequence is Gamma-hemolysin component A (309 aa).

An N-terminal signal peptide occupies residues 1–29 (MIKNKILTATLAVGLIAPLANPFIEISKA).

This sequence belongs to the aerolysin family. Toxicity requires sequential binding and synergistic association of a class S and a class F component which form heterooligomeric complexes. HlgA (class S) associates with HlgB (class F) thus forming an AB toxin in strains producing both gamma-hemolysins and leukocidins. HlgA and LukF-PV can also form a complex.

Its subcellular location is the secreted. Toxin that seems to act by forming pores in the membrane of the cell. Has a hemolytic and a leucotoxic activity. This is Gamma-hemolysin component A (hlgA) from Staphylococcus aureus (strain COL).